A 213-amino-acid polypeptide reads, in one-letter code: Anti-sigma-E factor ChrR (213 aa).

Residues 2–85 (TIRHHVSDAL…QIQRPAPARR (84 aa)) are sufficient to bind sigma factor and inhibit its activity. Positions 6, 31, 35, 38, 141, 143, 147, and 177 each coordinate Zn(2+). Residues 86-194 (ADPRAPAPLA…LDCICLAATD (109 aa)) are required for response to singlet oxygen.

It belongs to the zinc-associated anti-sigma factor (ZAS) superfamily. In terms of assembly, forms a 1:1 complex with cognate ECF RNA polymerase sigma factor RpoE; this inhibits the interaction of RpoE with the RNA polymerase catalytic core. The cofactor is Zn(2+).

In terms of biological role, anti-sigma factor that inhibits the activity of the extracytoplasmic function (ECF) sigma-E factor (RpoE), thereby indirectly regulating the transcription of the cycA and rpoE genes. ECF sigma factors are held in an inactive form by a cognate anti-sigma factor. This Cereibacter sphaeroides (strain ATCC 17023 / DSM 158 / JCM 6121 / CCUG 31486 / LMG 2827 / NBRC 12203 / NCIMB 8253 / ATH 2.4.1.) (Rhodobacter sphaeroides) protein is Anti-sigma-E factor ChrR (chrR).